A 449-amino-acid polypeptide reads, in one-letter code: Maltoporin (449 aa).

An N-terminal signal peptide occupies residues 1-24 (MITLRKLPLAVAVAAGVMSAQAMA).

It belongs to the porin LamB (TC 1.B.3) family. In terms of assembly, homotrimer formed of three 18-stranded antiparallel beta-barrels, containing three independent channels.

Its subcellular location is the cell outer membrane. The catalysed reaction is beta-maltose(in) = beta-maltose(out). Its function is as follows. Involved in the transport of maltose and maltodextrins. This is Maltoporin from Citrobacter koseri (strain ATCC BAA-895 / CDC 4225-83 / SGSC4696).